A 92-amino-acid chain; its full sequence is Islet amyloid polypeptide (92 aa).

A signal peptide spans 1-22 (MHISKLPAALLIFSVALNHLKA). The propeptide occupies 23 to 34 (TPVRSGTNHQMD). Cysteines 38 and 43 form a disulfide. The residue at position 73 (Tyr73) is a Tyrosine amide. Residues 77–92 (SAAEIPDGDSLDLFLL) constitute a propeptide that is removed on maturation.

It belongs to the calcitonin family. As to quaternary structure, can form homodimers. Interacts with IDE and INS. Interaction with INS inhibits homodimerization and fibril formation.

The protein localises to the secreted. Amylin/IAPP is a glucoregulatory peptide hormone that plays an important role in the regulation of energy homeostasis. Selectively inhibits insulin-stimulated glucose utilization and glycogen deposition in muscle, while not affecting adipocyte glucose metabolism. IAPP function is mediated by the CALCR-RAMPs (AMYRs) receptor complexes. Amylin can also bind CALCR receptor in the absence of RAMPs, although it is more selective for AMYRs. This chain is Islet amyloid polypeptide (IAPP), found in Mesocricetus auratus (Golden hamster).